Consider the following 54-residue polypeptide: Ferredoxin (54 aa).

2 4Fe-4S ferredoxin-type domains span residues 2 to 25 (YVIN…IQQG) and 26 to 54 (SIYA…NPED). Residues Cys-8, Cys-11, Cys-14, Cys-18, Cys-35, Cys-38, Cys-41, and Cys-45 each contribute to the [4Fe-4S] cluster site.

[4Fe-4S] cluster is required as a cofactor.

Functionally, ferredoxins are iron-sulfur proteins that transfer electrons in a wide variety of metabolic reactions. This is Ferredoxin from Peptoniphilus asaccharolyticus (Peptostreptococcus asaccharolyticus).